The following is a 296-amino-acid chain: Porphobilinogen deaminase (296 aa).

C232 is modified (S-(dipyrrolylmethanemethyl)cysteine).

It belongs to the HMBS family. Monomer. Dipyrromethane is required as a cofactor.

The enzyme catalyses 4 porphobilinogen + H2O = hydroxymethylbilane + 4 NH4(+). The protein operates within porphyrin-containing compound metabolism; protoporphyrin-IX biosynthesis; coproporphyrinogen-III from 5-aminolevulinate: step 2/4. In terms of biological role, tetrapolymerization of the monopyrrole PBG into the hydroxymethylbilane pre-uroporphyrinogen in several discrete steps. This is Porphobilinogen deaminase from Corynebacterium aurimucosum (strain ATCC 700975 / DSM 44827 / CIP 107346 / CN-1) (Corynebacterium nigricans).